Here is a 291-residue protein sequence, read N- to C-terminus: Diaminopimelate epimerase (291 aa).

Substrate-binding residues include N13, Q46, and N66. The active-site Proton donor is the C75. Substrate is bound by residues 76–77, N156, N189, and 207–208; these read GN and ER. Catalysis depends on C216, which acts as the Proton acceptor. Residue 217-218 participates in substrate binding; that stretch reads GS.

The protein belongs to the diaminopimelate epimerase family. Homodimer.

It is found in the cytoplasm. The enzyme catalyses (2S,6S)-2,6-diaminopimelate = meso-2,6-diaminopimelate. The protein operates within amino-acid biosynthesis; L-lysine biosynthesis via DAP pathway; DL-2,6-diaminopimelate from LL-2,6-diaminopimelate: step 1/1. Functionally, catalyzes the stereoinversion of LL-2,6-diaminopimelate (L,L-DAP) to meso-diaminopimelate (meso-DAP), a precursor of L-lysine and an essential component of the bacterial peptidoglycan. This is Diaminopimelate epimerase from Rhodospirillum centenum (strain ATCC 51521 / SW).